We begin with the raw amino-acid sequence, 211 residues long: Mitotic spindle assembly checkpoint protein MAD2B (211 aa).

Residues 13-203 (QVVADVLSEF…SDILKMQLYV (191 aa)) form the HORMA domain. The mediates interaction with REV1 and REV3L and homodimerization stretch occupies residues 21–155 (EFLEVAVHLI…FTVLVHTREA (135 aa)).

In terms of assembly, homooligomer. Heterodimer with REV3L. This dimer forms the minimal DNA polymerase zeta complex (Pol-zeta2), with REV3L bearing DNA polymerase catalytic activity, although its activity is very low in this context. Component of the tetrameric Pol-zeta complex (Pol-zeta4), which consists of REV3L, MAD2L2, POLD2 and POLD3; Pol-zeta4 is the fully active form of DNA polymerase zeta. Component of the shieldin complex, consisting of SHLD1, SHLD2, SHLD3 and MAD2L2/REV7. Within the complex, SHLD2 forms a scaffold which interacts with a SHLD3-MAD2L2 subcomplex via its N-terminus, and with SHLD1 via its C-terminus. Interacts with REV1. Interacts with ADAM9. Interacts with CHAMP1. Interacts with FZR1 (in complex with the anaphase promoting complex APC). May interact with CDC20. Interacts with RAN. Interacts with ELK1; the interaction is direct and recruits MAD2L2 to ELK1-specific promoters. May interact with the JNK kinases MAPK8 and/or MAPK9 to stimulate ELK1 phosphorylation and transcriptional activity upon DNA damage. Interacts with TCF7L2; prevents its binding to promoters and negatively modulates its transcriptional activity. Interacts with YY1AP1. Interacts with PRCC; the interaction is direct. Interacts with POGZ. Interacts with ASTE1.

Its subcellular location is the nucleus. It localises to the cytoplasm. The protein localises to the cytoskeleton. The protein resides in the spindle. In terms of biological role, adapter protein able to interact with different proteins and involved in different biological processes. Mediates the interaction between the error-prone DNA polymerase zeta catalytic subunit REV3L and the inserter polymerase REV1, thereby mediating the second polymerase switching in translesion DNA synthesis. Translesion DNA synthesis releases the replication blockade of replicative polymerases, stalled in presence of DNA lesions. Component of the shieldin complex, which plays an important role in repair of DNA double-stranded breaks (DSBs). During G1 and S phase of the cell cycle, the complex functions downstream of TP53BP1 to promote non-homologous end joining (NHEJ) and suppress DNA end resection. Mediates various NHEJ-dependent processes including immunoglobulin class-switch recombination, and fusion of unprotected telomeres. May also regulate another aspect of cellular response to DNA damage through regulation of the JNK-mediated phosphorylation and activation of the transcriptional activator ELK1. Inhibits the FZR1- and probably CDC20-mediated activation of the anaphase promoting complex APC thereby regulating progression through the cell cycle. Regulates TCF7L2-mediated gene transcription and may play a role in epithelial-mesenchymal transdifferentiation. The polypeptide is Mitotic spindle assembly checkpoint protein MAD2B (Mad2l2) (Rattus norvegicus (Rat)).